We begin with the raw amino-acid sequence, 317 residues long: Acetyl-coenzyme A carboxylase carboxyl transferase subunit alpha (317 aa).

One can recognise a CoA carboxyltransferase C-terminal domain in the interval N33 to E294.

The protein belongs to the AccA family. Acetyl-CoA carboxylase is a heterohexamer composed of biotin carboxyl carrier protein (AccB), biotin carboxylase (AccC) and two subunits each of ACCase subunit alpha (AccA) and ACCase subunit beta (AccD).

The protein localises to the cytoplasm. The catalysed reaction is N(6)-carboxybiotinyl-L-lysyl-[protein] + acetyl-CoA = N(6)-biotinyl-L-lysyl-[protein] + malonyl-CoA. The protein operates within lipid metabolism; malonyl-CoA biosynthesis; malonyl-CoA from acetyl-CoA: step 1/1. Functionally, component of the acetyl coenzyme A carboxylase (ACC) complex. First, biotin carboxylase catalyzes the carboxylation of biotin on its carrier protein (BCCP) and then the CO(2) group is transferred by the carboxyltransferase to acetyl-CoA to form malonyl-CoA. The sequence is that of Acetyl-coenzyme A carboxylase carboxyl transferase subunit alpha from Pasteurella multocida (strain Pm70).